The sequence spans 563 residues: uncharacterized protein (563 aa).

A disordered region spans residues 30–303 (QSIEIQPEEK…EKSPEKQVEI (274 aa)). The segment covering 36–56 (PEEKPSEEKQPEEKSSEEKPK) has biased composition (basic and acidic residues). Residues 61-72 (SAINSEKTQKPI) are compositionally biased toward polar residues. Basic and acidic residues-rich tracts occupy residues 101–115 (TTERPQPKTTMDDKQ), 123–276 (ERGR…EPRP), and 282–303 (EKSPDEHQEKHQEKSPEKQVEI).

It belongs to the mimivirus L41 family.

This is an uncharacterized protein from Acanthamoeba polyphaga (Amoeba).